Here is a 246-residue protein sequence, read N- to C-terminus: Pyridoxine 5'-phosphate synthase (246 aa).

Positions 8 and 19 each coordinate 3-amino-2-oxopropyl phosphate. H44 acts as the Proton acceptor in catalysis. 1-deoxy-D-xylulose 5-phosphate contacts are provided by R46 and H51. E76 acts as the Proton acceptor in catalysis. T106 is a 1-deoxy-D-xylulose 5-phosphate binding site. The active-site Proton donor is the H198. 3-amino-2-oxopropyl phosphate is bound by residues D199 and 221 to 222; that span reads GH.

This sequence belongs to the PNP synthase family. In terms of assembly, homooctamer; tetramer of dimers.

The protein localises to the cytoplasm. The catalysed reaction is 3-amino-2-oxopropyl phosphate + 1-deoxy-D-xylulose 5-phosphate = pyridoxine 5'-phosphate + phosphate + 2 H2O + H(+). Its pathway is cofactor biosynthesis; pyridoxine 5'-phosphate biosynthesis; pyridoxine 5'-phosphate from D-erythrose 4-phosphate: step 5/5. Its function is as follows. Catalyzes the complicated ring closure reaction between the two acyclic compounds 1-deoxy-D-xylulose-5-phosphate (DXP) and 3-amino-2-oxopropyl phosphate (1-amino-acetone-3-phosphate or AAP) to form pyridoxine 5'-phosphate (PNP) and inorganic phosphate. This Brucella suis (strain ATCC 23445 / NCTC 10510) protein is Pyridoxine 5'-phosphate synthase.